A 140-amino-acid polypeptide reads, in one-letter code: Holo-[acyl-carrier-protein] synthase (140 aa).

Aspartate 8 and glutamate 62 together coordinate Mg(2+).

Belongs to the P-Pant transferase superfamily. AcpS family. The cofactor is Mg(2+).

Its subcellular location is the cytoplasm. The enzyme catalyses apo-[ACP] + CoA = holo-[ACP] + adenosine 3',5'-bisphosphate + H(+). In terms of biological role, transfers the 4'-phosphopantetheine moiety from coenzyme A to a Ser of acyl-carrier-protein. The chain is Holo-[acyl-carrier-protein] synthase from Cupriavidus necator (strain ATCC 17699 / DSM 428 / KCTC 22496 / NCIMB 10442 / H16 / Stanier 337) (Ralstonia eutropha).